Consider the following 40-residue polypeptide: Photosystem II reaction center protein Y (40 aa).

Residues 4–22 (LLVITLPILAAIGWVTLNI) traverse the membrane as a helical segment.

It belongs to the PsbY family. In terms of assembly, PSII is composed of 1 copy each of membrane proteins PsbA, PsbB, PsbC, PsbD, PsbE, PsbF, PsbH, PsbI, PsbJ, PsbK, PsbL, PsbM, PsbT, PsbX, PsbY, Psb30/Ycf12, peripheral proteins PsbO, CyanoQ (PsbQ), PsbU, PsbV and a large number of cofactors. It forms dimeric complexes.

It localises to the cellular thylakoid membrane. Its function is as follows. Loosely associated component of the core of photosystem II (PSII), it is not always seen in crystals. PSII is a light-driven water plastoquinone oxidoreductase, using light energy to abstract electrons from H(2)O, generating a proton gradient subsequently used for ATP formation. The chain is Photosystem II reaction center protein Y from Prochlorococcus marinus (strain SARG / CCMP1375 / SS120).